The sequence spans 308 residues: Beta-carotene hydroxylase 2, chloroplastic (308 aa).

The N-terminal 59 residues, 1-59 (MAAARISFSSTSRTSYYRHSPFLGPKPTPTTPSVYPITPFSPNLGSILRCRRRPSFTVC), are a transit peptide targeting the chloroplast. Helical transmembrane passes span 105–125 (YLVA…MAVY) and 139–159 (FSEM…MEFW). Residues 152-279 (AAVGMEFWAR…KFNGVPYGLF (128 aa)) form the Fatty acid hydroxylase domain. The Histidine box-1 signature appears at 164–169 (HKALWH). Positions 176 to 180 (HESHH) match the Histidine box-2 motif. The next 2 helical transmembrane spans lie at 191-211 (DVFA…GFFH) and 215-235 (IPGL…AYMF). The Histidine box-3 motif lies at 237-242 (HDGLVH). The Histidine box-4 motif lies at 263–267 (HSLHH).

Belongs to the sterol desaturase family.

It localises to the plastid. The protein localises to the chloroplast membrane. The catalysed reaction is all-trans-beta-carotene + 4 reduced [2Fe-2S]-[ferredoxin] + 2 O2 + 4 H(+) = all-trans-zeaxanthin + 4 oxidized [2Fe-2S]-[ferredoxin] + 2 H2O. It carries out the reaction all-trans-beta-carotene + 2 reduced [2Fe-2S]-[ferredoxin] + O2 + 2 H(+) = beta-cryptoxanthin + 2 oxidized [2Fe-2S]-[ferredoxin] + H2O. It catalyses the reaction beta-cryptoxanthin + 2 reduced [2Fe-2S]-[ferredoxin] + O2 + 2 H(+) = all-trans-zeaxanthin + 2 oxidized [2Fe-2S]-[ferredoxin] + H2O. Inhibited by o-phenanthroline and 8-hydroxyquinoline. Its function is as follows. Nonheme diiron monooxygenase involved in the biosynthesis of xanthophylls. Specific for beta-ring hydroxylations of beta-carotene. Produces beta-cryptoxanthin and zeaxanthin. Uses ferredoxin as an electron donor. In Capsicum annuum (Capsicum pepper), this protein is Beta-carotene hydroxylase 2, chloroplastic.